The sequence spans 326 residues: Probable cell division protein WhiA (326 aa).

The segment at residues 275–308 is a DNA-binding region (H-T-H motif); that stretch reads SLEELGQLSDPPLTKDAVAGRIRRLLAMADKKAS.

It belongs to the WhiA family.

Involved in cell division and chromosome segregation. This chain is Probable cell division protein WhiA, found in Beutenbergia cavernae (strain ATCC BAA-8 / DSM 12333 / CCUG 43141 / JCM 11478 / NBRC 16432 / NCIMB 13614 / HKI 0122).